The sequence spans 321 residues: D-alanine--D-alanine ligase (321 aa).

The region spanning R121 to K315 is the ATP-grasp domain. Residue M148–Q199 coordinates ATP. Mg(2+) contacts are provided by E268, E282, and N284.

Belongs to the D-alanine--D-alanine ligase family. Mg(2+) is required as a cofactor. The cofactor is Mn(2+).

It localises to the cytoplasm. It catalyses the reaction 2 D-alanine + ATP = D-alanyl-D-alanine + ADP + phosphate + H(+). It functions in the pathway cell wall biogenesis; peptidoglycan biosynthesis. Cell wall formation. The protein is D-alanine--D-alanine ligase of Rickettsia typhi (strain ATCC VR-144 / Wilmington).